The chain runs to 154 residues: Myoglobin (154 aa).

The region spanning 2–148 is the Globin domain; the sequence is GLSDQEWQHV…FRNDMASKYK (147 aa). His-65 contributes to the nitrite binding site. His-65 contributes to the O2 binding site. Heme b is bound at residue His-94.

As to quaternary structure, monomeric.

The protein resides in the cytoplasm. Its subcellular location is the sarcoplasm. The enzyme catalyses Fe(III)-heme b-[protein] + nitric oxide + H2O = Fe(II)-heme b-[protein] + nitrite + 2 H(+). It catalyses the reaction H2O2 + AH2 = A + 2 H2O. Monomeric heme protein which primary function is to store oxygen and facilitate its diffusion within muscle tissues. Reversibly binds oxygen through a pentacoordinated heme iron and enables its timely and efficient release as needed during periods of heightened demand. Depending on the oxidative conditions of tissues and cells, and in addition to its ability to bind oxygen, it also has a nitrite reductase activity whereby it regulates the production of bioactive nitric oxide. Under stress conditions, like hypoxia and anoxia, it also protects cells against reactive oxygen species thanks to its pseudoperoxidase activity. The chain is Myoglobin from Dromaius novaehollandiae (Emu).